Reading from the N-terminus, the 321-residue chain is Protein BIG GRAIN 1-like E (321 aa).

A disordered region spans residues 134 to 217; the sequence is AGSKKNKSKS…PPPYLNTPTK (84 aa). Positions 135 to 147 are enriched in basic residues; that stretch reads GSKKNKSKSKSKT. Positions 172–206 are enriched in low complexity; the sequence is ISHFFSSSRSTSTTTTTTASSSSKSLISSSSSGFR.

Belongs to the BIG GRAIN 1 (BG1) plant protein family.

The protein resides in the cell membrane. Its function is as follows. Involved in auxin transport. Regulator of the auxin signaling pathway. The polypeptide is Protein BIG GRAIN 1-like E (Arabidopsis thaliana (Mouse-ear cress)).